Here is a 325-residue protein sequence, read N- to C-terminus: Acetyl-coenzyme A carboxylase carboxyl transferase subunit alpha (325 aa).

Residues 43–297 enclose the CoA carboxyltransferase C-terminal domain; the sequence is ELENNSTQLR…KTSLIAHLRQ (255 aa).

This sequence belongs to the AccA family. Acetyl-CoA carboxylase is a heterohexamer composed of biotin carboxyl carrier protein (AccB), biotin carboxylase (AccC) and two subunits each of ACCase subunit alpha (AccA) and ACCase subunit beta (AccD).

Its subcellular location is the cytoplasm. It carries out the reaction N(6)-carboxybiotinyl-L-lysyl-[protein] + acetyl-CoA = N(6)-biotinyl-L-lysyl-[protein] + malonyl-CoA. The protein operates within lipid metabolism; malonyl-CoA biosynthesis; malonyl-CoA from acetyl-CoA: step 1/1. Its function is as follows. Component of the acetyl coenzyme A carboxylase (ACC) complex. First, biotin carboxylase catalyzes the carboxylation of biotin on its carrier protein (BCCP) and then the CO(2) group is transferred by the carboxyltransferase to acetyl-CoA to form malonyl-CoA. This chain is Acetyl-coenzyme A carboxylase carboxyl transferase subunit alpha, found in Cyanothece sp. (strain PCC 7425 / ATCC 29141).